The chain runs to 64 residues: Small ribosomal subunit protein bS21 (64 aa).

The protein belongs to the bacterial ribosomal protein bS21 family.

The sequence is that of Small ribosomal subunit protein bS21 from Oenococcus oeni (strain ATCC BAA-331 / PSU-1).